Consider the following 84-residue polypeptide: Cytoplasmic envelopment protein 3 (84 aa).

G2 carries N-myristoyl glycine; by host lipidation. The asp/Glu-rich (acidic) stretch occupies residues 40 to 46 (DLDDLRC).

It belongs to the herpesviridae cytoplasmic envelopment protein 3 family. In terms of assembly, interacts with cytoplasmic envelopment protein 2; this interaction is essential for the proper localization of each protein to the assembly complex and thus for the production of infectious virus. Myristoylation and palmitoylation (probably on one or more of the nearby cysteines at the N-terminus) enable membrane-binding and Golgi apparatus-specific targeting and are essential for efficient packaging. Post-translationally, phosphorylated. Phosphorylation does not seem to be required for recycling to the host Golgi apparatus. Packaging is selective for underphosphorylated forms.

It is found in the virion tegument. The protein localises to the virion membrane. Its subcellular location is the host cell membrane. It localises to the host Golgi apparatus membrane. In terms of biological role, plays an important role in the cytoplasmic envelopment of tegument proteins and capsids during the assembly and egress processes. Also participates in viral entry at the fusion step probably by regulating the core fusion machinery. This Gallus gallus (Chicken) protein is Cytoplasmic envelopment protein 3 (MDV023).